We begin with the raw amino-acid sequence, 282 residues long: Pantothenate synthetase (282 aa).

ATP is bound at residue 30–37 (MGYYHAGH). Histidine 37 (proton donor) is an active-site residue. Position 61 (glutamine 61) interacts with (R)-pantoate. Glutamine 61 lines the beta-alanine pocket. 147–150 (GQKD) contacts ATP. Position 153 (glutamine 153) interacts with (R)-pantoate. Residues valine 176 and 184-187 (LSSR) contribute to the ATP site.

Belongs to the pantothenate synthetase family. As to quaternary structure, homodimer.

The protein localises to the cytoplasm. The catalysed reaction is (R)-pantoate + beta-alanine + ATP = (R)-pantothenate + AMP + diphosphate + H(+). It functions in the pathway cofactor biosynthesis; (R)-pantothenate biosynthesis; (R)-pantothenate from (R)-pantoate and beta-alanine: step 1/1. Its function is as follows. Catalyzes the condensation of pantoate with beta-alanine in an ATP-dependent reaction via a pantoyl-adenylate intermediate. This chain is Pantothenate synthetase, found in Desulfovibrio desulfuricans (strain ATCC 27774 / DSM 6949 / MB).